A 198-amino-acid polypeptide reads, in one-letter code: Cerebellin-4 (198 aa).

Positions 1–24 (MGSARRALSVVPAVLLILVLPVWA) are cleaved as a signal peptide. Residues Asn-26 and Asn-85 are each glycosylated (N-linked (GlcNAc...) asparagine). A C1q domain is found at 63-198 (AANSKVAFSA…TFSGFLVFPL (136 aa)).

In terms of assembly, homohexamer; disulfide-linked homotrimers. The trimers are assembled via the globular C1q domains. The trimers associate via N-terminal cysteine residues to form disulfide-linked hexamers. May form oligomers with CBLN1, CBLN2 and CBLN3 prior to secretion. Once secreted, does not interact with other CBLN family members. Strongly interacts with DCC in a NTN1-displaceable fashion. Weakly binds to NRXN1 and NRXN2 long and short isoforms produced by alternative promoter usage. Interaction with NRXN3 short isoform is hardly detectable; no interaction at all with NRXN3 long isoform. Does not interact with NEO1, GRID1 and GRID2. Post-translationally, sialoglycoprotein. In terms of tissue distribution, expressed in brain with high levels in particular thalamic nuclei. In the thalamus, predominantly expressed in neurons within the parafascicular nucleus. Found in the hippocampus, mostly in the dendrites and somata of pyramidal neurons (at protein level). Very low or no expression in most other brain regions. Highly expressed in the ventral medial habenula.

Its subcellular location is the secreted. It localises to the synapse. Its function is as follows. Acts as a synaptic organizer in specific subsets of neurons in the brain. Essential for the formation and maintenance of inhibitory GABAergic synapses. Promotes the development of dendrite-targeting inhibitory GABAergic synapses made by somatostatin-positive interneurons. May contribute to the function of ventral medial habenula region of the brain implicated in the regulation of anxiety-related behaviors. May play a role in CBLN3 export from the endoplasmic reticulum and secretion. The protein is Cerebellin-4 (Cbln4) of Mus musculus (Mouse).